Reading from the N-terminus, the 526-residue chain is Putative UDP-glucuronosyltransferase ugt-48 (526 aa).

An N-terminal signal peptide occupies residues 1 to 17 (MLLRILTFLAVCQVTTS). Asn58 and Asn305 each carry an N-linked (GlcNAc...) asparagine glycan. A helical transmembrane segment spans residues 489-509 (FYNLDIIITAASIPVLIFIVL). N-linked (GlcNAc...) asparagine glycosylation is present at Asn513.

This sequence belongs to the UDP-glycosyltransferase family. In terms of assembly, interacts with cmd-1 in the presence of Ca(2+).

The protein resides in the membrane. It carries out the reaction glucuronate acceptor + UDP-alpha-D-glucuronate = acceptor beta-D-glucuronoside + UDP + H(+). This Caenorhabditis elegans protein is Putative UDP-glucuronosyltransferase ugt-48 (ugt-48).